Consider the following 248-residue polypeptide: Ribonuclease PH (248 aa).

Phosphate-binding positions include arginine 86 and 124–126; that span reads GTR.

Belongs to the RNase PH family. Homohexameric ring arranged as a trimer of dimers.

The catalysed reaction is tRNA(n+1) + phosphate = tRNA(n) + a ribonucleoside 5'-diphosphate. In terms of biological role, phosphorolytic 3'-5' exoribonuclease that plays an important role in tRNA 3'-end maturation. Removes nucleotide residues following the 3'-CCA terminus of tRNAs; can also add nucleotides to the ends of RNA molecules by using nucleoside diphosphates as substrates, but this may not be physiologically important. Probably plays a role in initiation of 16S rRNA degradation (leading to ribosome degradation) during starvation. The polypeptide is Ribonuclease PH (Listeria innocua serovar 6a (strain ATCC BAA-680 / CLIP 11262)).